The primary structure comprises 429 residues: Chaperone SurA (429 aa).

The first 18 residues, 1–18, serve as a signal peptide directing secretion; it reads MFKRIALVCALFSGVCFA. PpiC domains are found at residues 170–271 and 281–380; these read NLTY…KLVA and ITQT…EVIA.

Its subcellular location is the periplasm. It carries out the reaction [protein]-peptidylproline (omega=180) = [protein]-peptidylproline (omega=0). Chaperone involved in the correct folding and assembly of outer membrane proteins. Recognizes specific patterns of aromatic residues and the orientation of their side chains, which are found more frequently in integral outer membrane proteins. May act in both early periplasmic and late outer membrane-associated steps of protein maturation. The sequence is that of Chaperone SurA from Legionella pneumophila (strain Lens).